We begin with the raw amino-acid sequence, 197 residues long: Nucleoside triphosphate pyrophosphatase (197 aa).

The active-site Proton acceptor is the D71.

It belongs to the Maf family. It depends on a divalent metal cation as a cofactor.

It is found in the cytoplasm. It carries out the reaction a ribonucleoside 5'-triphosphate + H2O = a ribonucleoside 5'-phosphate + diphosphate + H(+). The catalysed reaction is a 2'-deoxyribonucleoside 5'-triphosphate + H2O = a 2'-deoxyribonucleoside 5'-phosphate + diphosphate + H(+). Its function is as follows. Nucleoside triphosphate pyrophosphatase. May have a dual role in cell division arrest and in preventing the incorporation of modified nucleotides into cellular nucleic acids. The protein is Nucleoside triphosphate pyrophosphatase of Synechococcus sp. (strain JA-2-3B'a(2-13)) (Cyanobacteria bacterium Yellowstone B-Prime).